A 384-amino-acid polypeptide reads, in one-letter code: Cell adhesion molecule CEACAM18 (384 aa).

The N-terminal stretch at 1 to 30 is a signal peptide; it reads MDLSRPRWSLWRRVFLMASLLACGICQASG. Residues N108, N112, N121, N162, and N270 are each glycosylated (N-linked (GlcNAc...) asparagine). The region spanning 227-314 is the Ig-like C2-type domain; that stretch reads PDYVLLRSNP…LIMYMDVRIQ (88 aa). C255 and C296 are disulfide-bonded. Positions 358–384 are disordered; it reads QPLLNQDKSGSMSVHPRPEDKTRRASR. Positions 359-369 are enriched in polar residues; sequence PLLNQDKSGSM. Residues 373–384 show a composition bias toward basic and acidic residues; the sequence is PRPEDKTRRASR.

This sequence belongs to the immunoglobulin superfamily. CEA family.

This is Cell adhesion molecule CEACAM18 from Homo sapiens (Human).